Consider the following 495-residue polypeptide: MSLWINGDWVTGEGERRVKTNPVGNEALWQGFDASPAQVEQACQAARKAFPAWAKLPFTARQAIVEKFATLLEANKAELTRVIARETGKPRWEATTEITAMINKITISVKAYHTRTGEQHTAMADGAATLRHRPHGVLAVFGPYNFPGHLPNGHIVPALLAGNTVIFKPSELTPWSGEAVVKLWEQAGLPPGVLNLVQGGRETGQALSALSDLDGLLFTGSAGTGYQLHRQLAGQPEKILALEMGGNNPLIVEDPEDIDAAVHLAIQSAFVTAGQRCTCARRLLVKNGAQGDAFLARLIEVTARLVPDAWDAEPQPFIGGLISEQAANNVIHAWREHVARGAKTLLEPKLVQPGTSLLTPGIIDMSDARDIPDEEVFGPLLCVWRYDDFDSAIAMANNTRYGLSSGLISPDREKFDQLLIEARAGIVNWNKPLTGAASTAPFGGVGASGNHRASAWYAADYCAWPMASLETPALTLPEALNPGLDFTQGNGHESA.

220–225 (GSAGTG) is a binding site for NAD(+). Residues glutamate 243 and cysteine 277 contribute to the active site.

It belongs to the aldehyde dehydrogenase family. AstD subfamily.

The catalysed reaction is N-succinyl-L-glutamate 5-semialdehyde + NAD(+) + H2O = N-succinyl-L-glutamate + NADH + 2 H(+). It functions in the pathway amino-acid degradation; L-arginine degradation via AST pathway; L-glutamate and succinate from L-arginine: step 4/5. Functionally, catalyzes the NAD-dependent reduction of succinylglutamate semialdehyde into succinylglutamate. The polypeptide is N-succinylglutamate 5-semialdehyde dehydrogenase (Enterobacter sp. (strain 638)).